The chain runs to 422 residues: Testin (422 aa).

One can recognise a PET domain in the interval 92–199 (MILTSPVAAK…GDVKLPKEVE (108 aa)). Residues 135–165 (QPVAGSEGAQYRKKQLAKQLPAHDQDPSKCH) form a disordered region. Residues 155–165 (PAHDQDPSKCH) show a composition bias toward basic and acidic residues. 3 consecutive LIM zinc-binding domains span residues 234 to 299 (YYCF…SEKP), 300 to 359 (RCAG…NHAV), and 360 to 422 (SCQG…KMSS).

Belongs to the prickle / espinas / testin family.

It localises to the cytoplasm. The protein localises to the cell cortex. The protein resides in the cell junction. It is found in the focal adhesion. Its function is as follows. Scaffold protein that may play a role in cell adhesion, cell spreading and in the reorganization of the actin cytoskeleton. May inhibit cell growth. Regulates cranial neural crest migration. Acts together with prickle1 to control axial elongation. This is Testin from Xenopus tropicalis (Western clawed frog).